The sequence spans 160 residues: Transcriptional repressor NrdR (160 aa).

Residues 3 to 34 fold into a zinc finger; sequence CPFCGHADTQVVDSRVSEEGDTIRRRRRCLSC. In terms of domain architecture, ATP-cone spans 49–139; the sequence is PTVVKRDGSR…VYKSFEDIGE (91 aa).

It belongs to the NrdR family. Zn(2+) is required as a cofactor.

In terms of biological role, negatively regulates transcription of bacterial ribonucleotide reductase nrd genes and operons by binding to NrdR-boxes. This Bordetella avium (strain 197N) protein is Transcriptional repressor NrdR.